The chain runs to 741 residues: NAD(P)H-quinone oxidoreductase subunit 5, chloroplastic (741 aa).

The next 16 helical transmembrane spans lie at W9–I29, I39–S59, I89–I109, F125–I145, I147–T167, G185–F205, N219–A239, T258–A278, L280–I300, L327–I347, A354–S374, T396–S416, W425–Y445, L542–F562, A605–S625, and I721–S741.

This sequence belongs to the complex I subunit 5 family. As to quaternary structure, NDH is composed of at least 16 different subunits, 5 of which are encoded in the nucleus.

It localises to the plastid. It is found in the chloroplast thylakoid membrane. The catalysed reaction is a plastoquinone + NADH + (n+1) H(+)(in) = a plastoquinol + NAD(+) + n H(+)(out). The enzyme catalyses a plastoquinone + NADPH + (n+1) H(+)(in) = a plastoquinol + NADP(+) + n H(+)(out). Functionally, NDH shuttles electrons from NAD(P)H:plastoquinone, via FMN and iron-sulfur (Fe-S) centers, to quinones in the photosynthetic chain and possibly in a chloroplast respiratory chain. The immediate electron acceptor for the enzyme in this species is believed to be plastoquinone. Couples the redox reaction to proton translocation, and thus conserves the redox energy in a proton gradient. The sequence is that of NAD(P)H-quinone oxidoreductase subunit 5, chloroplastic (ndhF) from Lolium perenne (Perennial ryegrass).